A 452-amino-acid polypeptide reads, in one-letter code: Probable ECA polymerase (452 aa).

Helical transmembrane passes span 6-26 (FSGL…LTWF), 37-57 (VFFS…TSVL), 63-83 (VGVA…CFYG), 118-138 (VILM…NGFL), 155-175 (GVAL…VYFL), 181-201 (AWLF…MIVG), 207-227 (IIIA…ISLW), 228-248 (MLAA…LKRY), 341-361 (LVVM…GMII), 378-398 (YKAA…IVLA), and 410-430 (VFFL…FWLF).

Belongs to the WzyE family. In terms of assembly, probably part of a complex composed of WzxE, WzyE and WzzE.

It is found in the cell inner membrane. It participates in bacterial outer membrane biogenesis; enterobacterial common antigen biosynthesis. Its function is as follows. Probably involved in the polymerization of enterobacterial common antigen (ECA) trisaccharide repeat units. This Salmonella newport (strain SL254) protein is Probable ECA polymerase.